A 185-amino-acid polypeptide reads, in one-letter code: Ribosome-recycling factor (185 aa).

The protein belongs to the RRF family.

It is found in the cytoplasm. In terms of biological role, responsible for the release of ribosomes from messenger RNA at the termination of protein biosynthesis. May increase the efficiency of translation by recycling ribosomes from one round of translation to another. The protein is Ribosome-recycling factor of Symbiobacterium thermophilum (strain DSM 24528 / JCM 14929 / IAM 14863 / T).